The following is a 1284-amino-acid chain: ABC multidrug transporter atrC (1284 aa).

The span at 1 to 11 (MKSTAESKETP) shows a compositional bias: basic and acidic residues. Residues 1–24 (MKSTAESKETPSQDESTTSVPCTE) are disordered. Transmembrane regions (helical) follow at residues 55-75 (AVAILAACASGAGIALQNLIF), 99-119 (AAELALYFVYLGIARLVLSYT), 178-198 (IGLLFQGLAAFVTAFIIAFVV), 203-223 (TLICICIPVATIGTTGVVAAV), 282-302 (LLGLLFSAEYTIIYLGYGLAF), and 320-340 (IFTVLLSVVIASINLTLLAPY). One can recognise an ABC transmembrane type-1 1 domain in the interval 55–346 (AVAILAACAS…LAPYSIEFSR (292 aa)). An ABC transporter 1 domain is found at 381-626 (VELENVTFSY…DGVYAGLVKI (246 aa)). N-linked (GlcNAc...) asparagine glycosylation is found at Asn-385 and Asn-401. 416–423 (GQSGSGKS) serves as a coordination point for ATP. Asn-488 and Asn-632 each carry an N-linked (GlcNAc...) asparagine glycan. Helical transmembrane passes span 705–725 (LVVLLGCLGGCAMYPGQAILM) and 745–765 (FYASMLIVLAAGCLICYLAVG). The ABC transmembrane type-1 2 domain occupies 705-992 (LVVLLGCLGG…LFQWSTSITK (288 aa)). Asn-800 carries an N-linked (GlcNAc...) asparagine glycan. A run of 4 helical transmembrane segments spans residues 824–844 (IALVVIAVLQVVTCGILAIAF), 846–866 (WKLGLVVVFGGIPPLVGAGMV), 931–951 (MICFGLTQCIEYWFQALGFWY), and 955–975 (LVSLGETSMYSFFVAFLSVFF). A glycan (N-linked (GlcNAc...) asparagine) is linked at Asn-995. The ABC transporter 2 domain occupies 1027-1280 (IAMDNVRFSY…GGLYRRMCEA (254 aa)). 1062–1069 (GSSGCGKS) is a binding site for ATP. The N-linked (GlcNAc...) asparagine glycan is linked to Asn-1122.

Belongs to the ABC transporter superfamily. ABCB family. Multidrug resistance exporter (TC 3.A.1.201) subfamily.

It localises to the cell membrane. Its function is as follows. Pleiotropic ABC efflux transporter involved in the protection of the cells against a wide range of toxic compounds. The sequence is that of ABC multidrug transporter atrC from Emericella nidulans (strain FGSC A4 / ATCC 38163 / CBS 112.46 / NRRL 194 / M139) (Aspergillus nidulans).